A 239-amino-acid polypeptide reads, in one-letter code: 2,3,4,5-tetrahydropyridine-2,6-dicarboxylate N-acetyltransferase (239 aa).

The protein belongs to the transferase hexapeptide repeat family. DapH subfamily.

The catalysed reaction is (S)-2,3,4,5-tetrahydrodipicolinate + acetyl-CoA + H2O = L-2-acetamido-6-oxoheptanedioate + CoA. It participates in amino-acid biosynthesis; L-lysine biosynthesis via DAP pathway; LL-2,6-diaminopimelate from (S)-tetrahydrodipicolinate (acetylase route): step 1/3. In terms of biological role, catalyzes the transfer of an acetyl group from acetyl-CoA to tetrahydrodipicolinate. The polypeptide is 2,3,4,5-tetrahydropyridine-2,6-dicarboxylate N-acetyltransferase (Staphylococcus saprophyticus subsp. saprophyticus (strain ATCC 15305 / DSM 20229 / NCIMB 8711 / NCTC 7292 / S-41)).